Here is a 211-residue protein sequence, read N- to C-terminus: Porin MspA (211 aa).

An N-terminal signal peptide occupies residues 1–27; sequence MKAISRVLIAMVAAIAALFTSTGTSHA.

It belongs to the mycobacterial porin (TC 1.B.24) family. As to quaternary structure, forms very stable octamers. Isolated as a 100 kDa complex that can be reduced to monomers upon boiling in 80% dimethyl sulfoxide for 15 minutes. Structures show a goblet with the wide end on the exterior of the outer membrane and a central channel. It is not known if mixed oligomers of MspA with other Msp subunits form in vivo.

Its subcellular location is the cell outer membrane. It is found in the secreted. The protein resides in the cell wall. Its function is as follows. The major porin in this organism, forms a water-filled channel which favors the permeation of cations, amino acids, iron Fe(3+) and less efficiently phosphate. Does not transport Fe-ExoMS, the predominant siderophore. Plays a role in transport of beta-lactamase and hydrophilic fluoroquinolone antibiotics such as norfloxacin as well as chloramphenicol. There are about 2400 porins in wild-type, 800 in an mspA deletion and 150 in a double mspA-mspC deletion. Different conductance values with maxima at 2.3 and 4.6 nanosiemens might be caused by a simultaneous reconstitution of MspA channels into the membrane or by the existence of different MspA conformations. The protein is Porin MspA (mspA) of Mycolicibacterium smegmatis (strain ATCC 700084 / mc(2)155) (Mycobacterium smegmatis).